We begin with the raw amino-acid sequence, 282 residues long: HTH-type transcriptional activator RhaR (282 aa).

In terms of domain architecture, HTH araC/xylS-type spans aspartate 179–leucine 277. 2 consecutive DNA-binding regions (H-T-H motif) follow at residues aspartate 196–threonine 217 and isoleucine 244–threonine 267.

As to quaternary structure, binds DNA as a dimer.

It is found in the cytoplasm. Functionally, activates expression of the rhaSR operon in response to L-rhamnose. This is HTH-type transcriptional activator RhaR from Salmonella schwarzengrund (strain CVM19633).